We begin with the raw amino-acid sequence, 459 residues long: Glutamyl-tRNA reductase (459 aa).

Residues 49–52, serine 109, 114–116, and glutamine 120 contribute to the substrate site; these read TCNR and EQQ. Cysteine 50 functions as the Nucleophile in the catalytic mechanism. 189 to 194 lines the NADP(+) pocket; sequence GAGAMG.

This sequence belongs to the glutamyl-tRNA reductase family. In terms of assembly, homodimer.

The catalysed reaction is (S)-4-amino-5-oxopentanoate + tRNA(Glu) + NADP(+) = L-glutamyl-tRNA(Glu) + NADPH + H(+). Its pathway is porphyrin-containing compound metabolism; protoporphyrin-IX biosynthesis; 5-aminolevulinate from L-glutamyl-tRNA(Glu): step 1/2. Functionally, catalyzes the NADPH-dependent reduction of glutamyl-tRNA(Glu) to glutamate 1-semialdehyde (GSA). The chain is Glutamyl-tRNA reductase from Mycolicibacterium paratuberculosis (strain ATCC BAA-968 / K-10) (Mycobacterium paratuberculosis).